The sequence spans 201 residues: 3-isopropylmalate dehydratase small subunit (201 aa).

It belongs to the LeuD family. LeuD type 1 subfamily. As to quaternary structure, heterodimer of LeuC and LeuD.

It catalyses the reaction (2R,3S)-3-isopropylmalate = (2S)-2-isopropylmalate. It functions in the pathway amino-acid biosynthesis; L-leucine biosynthesis; L-leucine from 3-methyl-2-oxobutanoate: step 2/4. Its function is as follows. Catalyzes the isomerization between 2-isopropylmalate and 3-isopropylmalate, via the formation of 2-isopropylmaleate. In Escherichia fergusonii (strain ATCC 35469 / DSM 13698 / CCUG 18766 / IAM 14443 / JCM 21226 / LMG 7866 / NBRC 102419 / NCTC 12128 / CDC 0568-73), this protein is 3-isopropylmalate dehydratase small subunit.